A 328-amino-acid polypeptide reads, in one-letter code: Aspartate carbamoyltransferase catalytic subunit (328 aa).

Carbamoyl phosphate-binding residues include Arg-55 and Thr-56. Lys-83 provides a ligand contact to L-aspartate. Residues Arg-105, His-135, and Gln-138 each coordinate carbamoyl phosphate. L-aspartate-binding residues include Arg-176 and Arg-230. Residues Gly-271 and Pro-272 each coordinate carbamoyl phosphate.

It belongs to the aspartate/ornithine carbamoyltransferase superfamily. ATCase family. Heterododecamer (2C3:3R2) of six catalytic PyrB chains organized as two trimers (C3), and six regulatory PyrI chains organized as three dimers (R2).

It catalyses the reaction carbamoyl phosphate + L-aspartate = N-carbamoyl-L-aspartate + phosphate + H(+). The protein operates within pyrimidine metabolism; UMP biosynthesis via de novo pathway; (S)-dihydroorotate from bicarbonate: step 2/3. In terms of biological role, catalyzes the condensation of carbamoyl phosphate and aspartate to form carbamoyl aspartate and inorganic phosphate, the committed step in the de novo pyrimidine nucleotide biosynthesis pathway. This chain is Aspartate carbamoyltransferase catalytic subunit, found in Streptomyces griseus subsp. griseus (strain JCM 4626 / CBS 651.72 / NBRC 13350 / KCC S-0626 / ISP 5235).